The primary structure comprises 215 residues: Guanylate kinase (215 aa).

A Guanylate kinase-like domain is found at 11–189; that stretch reads GNVFMVVAPS…ALTELVQIIS (179 aa). Residue 18 to 25 participates in ATP binding; it reads APSGAGKS.

It belongs to the guanylate kinase family.

The protein localises to the cytoplasm. The enzyme catalyses GMP + ATP = GDP + ADP. Functionally, essential for recycling GMP and indirectly, cGMP. This Bordetella bronchiseptica (strain ATCC BAA-588 / NCTC 13252 / RB50) (Alcaligenes bronchisepticus) protein is Guanylate kinase.